The following is a 385-amino-acid chain: DNA replication and repair protein RecF (385 aa).

30–37 contributes to the ATP binding site; it reads GRNGQGKT.

It belongs to the RecF family.

The protein localises to the cytoplasm. Its function is as follows. The RecF protein is involved in DNA metabolism; it is required for DNA replication and normal SOS inducibility. RecF binds preferentially to single-stranded, linear DNA. It also seems to bind ATP. This chain is DNA replication and repair protein RecF, found in Leifsonia xyli subsp. xyli (strain CTCB07).